The primary structure comprises 351 residues: MNDKRKPSFQSAGKTFQERSVGEKYREKPTQNRPHFNDKFNGNRNEKSRFPRDKQEVKETRITQLSLSRAPSNKNAEQPKVQVTIKSTGTVYKTKEKKTGALSPRAPEKIKKNRAEEMKVYGENACLALFAERPESIVRLWATVQMSHKIGEVLSYLAENKKAYHVVDSEELARVSGTEHHGGICLLVKKPRAFTLQGYLDIPRNEDCLVLLDNVNNAQNIGGVLRTCAYFGVKNIVADNVENLYSAASMRVAEGGAEYIRVLEADYIDSALMQLRKSGYQIIHVSHNKQGDPLDKVRLKNKVVFVLSESSTESLATPEDTQARLTLASPIKSGLNIAVNAGVLLAKWYFR.

The interval 1 to 61 (MNDKRKPSFQ…RDKQEVKETR (61 aa)) is disordered. Composition is skewed to basic and acidic residues over residues 16 to 38 (FQERSVGEKYREKPTQNRPHFND) and 44 to 61 (RNEKSRFPRDKQEVKETR).

It belongs to the class IV-like SAM-binding methyltransferase superfamily. RNA methyltransferase TrmH family.

This is an uncharacterized protein from Haemophilus influenzae (strain ATCC 51907 / DSM 11121 / KW20 / Rd).